The chain runs to 251 residues: Aspartate/glutamate leucyltransferase (251 aa).

The protein belongs to the R-transferase family. Bpt subfamily.

It localises to the cytoplasm. The catalysed reaction is N-terminal L-glutamyl-[protein] + L-leucyl-tRNA(Leu) = N-terminal L-leucyl-L-glutamyl-[protein] + tRNA(Leu) + H(+). The enzyme catalyses N-terminal L-aspartyl-[protein] + L-leucyl-tRNA(Leu) = N-terminal L-leucyl-L-aspartyl-[protein] + tRNA(Leu) + H(+). In terms of biological role, functions in the N-end rule pathway of protein degradation where it conjugates Leu from its aminoacyl-tRNA to the N-termini of proteins containing an N-terminal aspartate or glutamate. The polypeptide is Aspartate/glutamate leucyltransferase (Xanthomonas axonopodis pv. citri (strain 306)).